Consider the following 325-residue polypeptide: Transaldolase (325 aa).

Lys125 (schiff-base intermediate with substrate) is an active-site residue.

The protein belongs to the transaldolase family. Type 2 subfamily.

It is found in the cytoplasm. The enzyme catalyses D-sedoheptulose 7-phosphate + D-glyceraldehyde 3-phosphate = D-erythrose 4-phosphate + beta-D-fructose 6-phosphate. Its pathway is carbohydrate degradation; pentose phosphate pathway; D-glyceraldehyde 3-phosphate and beta-D-fructose 6-phosphate from D-ribose 5-phosphate and D-xylulose 5-phosphate (non-oxidative stage): step 2/3. In terms of biological role, transaldolase is important for the balance of metabolites in the pentose-phosphate pathway. This chain is Transaldolase (tal), found in Campylobacter jejuni subsp. jejuni serotype O:2 (strain ATCC 700819 / NCTC 11168).